The primary structure comprises 406 residues: Argininosuccinate synthase (406 aa).

Residues 11 to 19 (AYSGGLDTS) and A38 each bind ATP. L-citrulline-binding residues include Y91 and S96. G121 is a binding site for ATP. T123, N127, and D128 together coordinate L-aspartate. Residue N127 participates in L-citrulline binding. The L-citrulline site is built by R131, S181, S190, E266, and Y278.

Belongs to the argininosuccinate synthase family. Type 1 subfamily. As to quaternary structure, homotetramer.

Its subcellular location is the cytoplasm. It carries out the reaction L-citrulline + L-aspartate + ATP = 2-(N(omega)-L-arginino)succinate + AMP + diphosphate + H(+). Its pathway is amino-acid biosynthesis; L-arginine biosynthesis; L-arginine from L-ornithine and carbamoyl phosphate: step 2/3. The protein is Argininosuccinate synthase of Campylobacter jejuni subsp. jejuni serotype O:6 (strain 81116 / NCTC 11828).